A 93-amino-acid chain; its full sequence is RNA-binding protein Hfq (93 aa).

The 60-residue stretch at 9-68 (DPFLNALRRERVPVSIYLVNGIKLQGQVESFDQFVILLKNTVSQMVYKHAISTVVPARPF) folds into the Sm domain. Residues 70–93 (VNSHTAAPSPAGGFNGQQDDNNDQ) are disordered.

Belongs to the Hfq family. In terms of assembly, homohexamer.

In terms of biological role, RNA chaperone that binds small regulatory RNA (sRNAs) and mRNAs to facilitate mRNA translational regulation in response to envelope stress, environmental stress and changes in metabolite concentrations. Also binds with high specificity to tRNAs. The protein is RNA-binding protein Hfq of Shewanella sediminis (strain HAW-EB3).